A 486-amino-acid chain; its full sequence is Protein ZINC INDUCED FACILITATOR 1 (486 aa).

Helical transmembrane passes span 41-61 (FVWI…PFLY), 82-102 (FVGC…GIVA), 109-129 (PIIL…GLSS), 131-151 (FWMA…LGTM), 170-190 (AVST…GFLA), 212-232 (ALPC…CCFI), 288-308 (IIVY…FALW), 327-347 (TVLA…YPLA), 362-384 (ALMI…SLSL), 391-408 (ILIN…LILQ), 423-443 (IAMT…GILF), and 461-481 (VFFV…KPFL).

It belongs to the major facilitator superfamily. Strongly expressed in developing leaves, differentiating zones of root tips and sepals of developing flowers. Restricted to vascular tissues in older leaves, mature roots, flowers, anthers and filaments. Not expressed in developing anthers.

Its subcellular location is the vacuole membrane. Major facilitator superfamily (MFS) transporter involved in zinc tolerance by participating in vacuolar sequestration of zinc. This is Protein ZINC INDUCED FACILITATOR 1 (ZIF1) from Arabidopsis thaliana (Mouse-ear cress).